We begin with the raw amino-acid sequence, 205 residues long: Large ribosomal subunit protein bL25 (205 aa).

The interval Pro185–Ala205 is disordered. Residues Ala186–Ala205 show a composition bias toward low complexity.

The protein belongs to the bacterial ribosomal protein bL25 family. CTC subfamily. As to quaternary structure, part of the 50S ribosomal subunit; part of the 5S rRNA/L5/L18/L25 subcomplex. Contacts the 5S rRNA. Binds to the 5S rRNA independently of L5 and L18.

In terms of biological role, this is one of the proteins that binds to the 5S RNA in the ribosome where it forms part of the central protuberance. This chain is Large ribosomal subunit protein bL25, found in Cupriavidus taiwanensis (strain DSM 17343 / BCRC 17206 / CCUG 44338 / CIP 107171 / LMG 19424 / R1) (Ralstonia taiwanensis (strain LMG 19424)).